Reading from the N-terminus, the 198-residue chain is FMN-dependent NADH:quinone oxidoreductase (198 aa).

FMN is bound by residues 92–95 (MWNL) and 136–139 (SRGG).

The protein belongs to the azoreductase type 1 family. In terms of assembly, homodimer. FMN serves as cofactor.

It catalyses the reaction 2 a quinone + NADH + H(+) = 2 a 1,4-benzosemiquinone + NAD(+). The catalysed reaction is N,N-dimethyl-1,4-phenylenediamine + anthranilate + 2 NAD(+) = 2-(4-dimethylaminophenyl)diazenylbenzoate + 2 NADH + 2 H(+). Its function is as follows. Quinone reductase that provides resistance to thiol-specific stress caused by electrophilic quinones. Functionally, also exhibits azoreductase activity. Catalyzes the reductive cleavage of the azo bond in aromatic azo compounds to the corresponding amines. The protein is FMN-dependent NADH:quinone oxidoreductase of Clostridium perfringens (strain ATCC 13124 / DSM 756 / JCM 1290 / NCIMB 6125 / NCTC 8237 / Type A).